The chain runs to 202 residues: Na(+)-translocating NADH-quinone reductase subunit E (202 aa).

Transmembrane regions (helical) follow at residues 11 to 31 (AVFI…FIAI), 35 to 55 (VETA…TVPA), 79 to 99 (LSFL…QILE), 114 to 134 (GVFL…LFMV), 144 to 164 (VVYG…LAGI), and 180 to 200 (LGIT…FSGV).

It belongs to the NqrDE/RnfAE family. As to quaternary structure, composed of six subunits; NqrA, NqrB, NqrC, NqrD, NqrE and NqrF.

It localises to the cell inner membrane. It catalyses the reaction a ubiquinone + n Na(+)(in) + NADH + H(+) = a ubiquinol + n Na(+)(out) + NAD(+). In terms of biological role, NQR complex catalyzes the reduction of ubiquinone-1 to ubiquinol by two successive reactions, coupled with the transport of Na(+) ions from the cytoplasm to the periplasm. NqrA to NqrE are probably involved in the second step, the conversion of ubisemiquinone to ubiquinol. The chain is Na(+)-translocating NADH-quinone reductase subunit E from Stutzerimonas stutzeri (strain A1501) (Pseudomonas stutzeri).